The chain runs to 100 residues: Large ribosomal subunit protein bL21 (100 aa).

Belongs to the bacterial ribosomal protein bL21 family. As to quaternary structure, part of the 50S ribosomal subunit. Contacts protein L20.

Its function is as follows. This protein binds to 23S rRNA in the presence of protein L20. The polypeptide is Large ribosomal subunit protein bL21 (Corynebacterium kroppenstedtii (strain DSM 44385 / JCM 11950 / CIP 105744 / CCUG 35717)).